The chain runs to 806 residues: Phenylalanine--tRNA ligase beta subunit (806 aa).

The 115-residue stretch at 44-158 (ADGLSKLVVG…EEAVPGDAIF (115 aa)) folds into the tRNA-binding domain. In terms of domain architecture, B5 spans 411-486 (TEPVEVSTSL…RIYGYDKLPT (76 aa)). Residues D464, D470, E473, and E474 each coordinate Mg(2+). An FDX-ACB domain is found at 713 to 806 (TKFPAMTRDV…LTEQVGAEVR (94 aa)).

The protein belongs to the phenylalanyl-tRNA synthetase beta subunit family. Type 1 subfamily. In terms of assembly, tetramer of two alpha and two beta subunits. The cofactor is Mg(2+).

Its subcellular location is the cytoplasm. It catalyses the reaction tRNA(Phe) + L-phenylalanine + ATP = L-phenylalanyl-tRNA(Phe) + AMP + diphosphate + H(+). This chain is Phenylalanine--tRNA ligase beta subunit, found in Streptococcus pyogenes serotype M28 (strain MGAS6180).